Reading from the N-terminus, the 129-residue chain is uncharacterized protein (129 aa).

Lys-121 is covalently cross-linked (Isoglutamyl lysine isopeptide (Lys-Gln) (interchain with Q-Cter in protein Pup)).

This is an uncharacterized protein from Mycolicibacterium smegmatis (strain ATCC 700084 / mc(2)155) (Mycobacterium smegmatis).